The following is a 638-amino-acid chain: Cytoplasmic dynein 1 intermediate chain 2 (638 aa).

Basic and acidic residues-rich tracts occupy residues 1–13 (MSDKSELKAELER) and 20–43 (QIREEKKRKEEERKKKETDQKKEA). 2 disordered regions span residues 1–135 (MSDK…GRGP) and 154–209 (VTYT…HELT). Serine 2 carries the N-acetylserine modification. Serine 51 carries the post-translational modification Diphosphoserine. 2 positions are modified to phosphoserine: serine 51 and serine 90. Positions 88-97 (PSSKSVSTPS) are enriched in low complexity. Threonine 95 is subject to Phosphothreonine. Residues serine 97, serine 101, and serine 104 each carry the phosphoserine modification. The tract at residues 133–165 (RGPIKLGMAKITQVDFPPREIVTYTKETQTPVT) is interaction with DYNLT1. The segment covering 190–209 (EKILKKDEENDSKAPPHELT) has biased composition (basic and acidic residues). WD repeat units follow at residues 277–326 (SKHR…TTPE), 330–370 (HCQS…RTPV), 379–420 (AHTH…HPQD), 429–469 (SKAV…AGIS), 474–519 (GHQG…PLYS), and 568–607 (EGNPALNRVRWTHSGREIAVGDSEGQIVIYDVGEQIAVPR).

The protein belongs to the dynein intermediate chain family. In terms of assembly, homodimer. The cytoplasmic dynein 1 complex consists of two catalytic heavy chains (HCs) and a number of non-catalytic subunits presented by intermediate chains (ICs), light intermediate chains (LICs) and light chains (LCs); the composition seems to vary in respect to the IC, LIC and LC composition. The heavy chain homodimer serves as a scaffold for the probable homodimeric assembly of the respective non-catalytic subunits. The ICs and LICs bind directly to the HC dimer and the LCs assemble on the IC dimer. Interacts with DYNLT3. Interacts with DYNLT1. Interacts (dephosphorylated at Ser-90) with DCTN1. Interacts with BICD2. Interacts with SPEF2. Interacts with CFAP61. Post-translationally, the phosphorylation status of Ser-90 appears to be involved in dynactin-dependent target binding. In terms of processing, pyrophosphorylation by 5-diphosphoinositol pentakisphosphate (5-IP7) promotes interaction with DCTN1. Serine pyrophosphorylation is achieved by Mg(2+)-dependent, but enzyme independent transfer of a beta-phosphate from a inositol pyrophosphate to a pre-phosphorylated serine residue. As to expression, skeletal muscle, testis, kidney, brain, heart and spleen.

It is found in the cytoplasm. Its subcellular location is the cytoskeleton. Its function is as follows. Acts as one of several non-catalytic accessory components of the cytoplasmic dynein 1 complex that are thought to be involved in linking dynein to cargos and to adapter proteins that regulate dynein function. Cytoplasmic dynein 1 acts as a motor for the intracellular retrograde motility of vesicles and organelles along microtubules. The intermediate chains mediate the binding of dynein to dynactin via its 150 kDa component (p150-glued) DCTN1. Involved in membrane-transport, such as Golgi apparatus, late endosomes and lysosomes. This chain is Cytoplasmic dynein 1 intermediate chain 2 (Dync1i2), found in Rattus norvegicus (Rat).